Here is a 969-residue protein sequence, read N- to C-terminus: Translation initiation factor IF-2 (969 aa).

Over residues 49-63 (HLRKSHGATDGDKRK) the composition is skewed to basic and acidic residues. Disordered stretches follow at residues 49-85 (HLRKSHGATDGDKRKITLTRKHTSEIKQSDATGKART), 100-128 (DDVSDVAEQGQAQVAEADDDAELKRREEE), and 143-380 (LRER…SFQA). Low complexity predominate over residues 105 to 114 (VAEQGQAQVA). Basic and acidic residues predominate over residues 143–181 (LRERQERLEREEAERRAREEAAEAERRRAEEEAAAKRAA). Positions 182–206 (AEAAAAQQAAQQAAAAQQAAAPADS) are enriched in low complexity. A compositionally biased stretch (basic and acidic residues) spans 209–260 (DEARAAAERAAQREAAKKAEDAAREAAEKARAEQEEIRKRREAAEAEARAIR). Low complexity predominate over residues 301 to 323 (AQARPAAKKPAAAPAATPAPAGA). The segment covering 353–366 (SSGGVDRGWRGGPK) has biased composition (gly residues). The region spanning 469 to 638 (PRPPVVTVMG…LLQAEVLELK (170 aa)) is the tr-type G domain. Residues 478–485 (GHVDHGKT) are G1. 478–485 (GHVDHGKT) is a GTP binding site. The segment at 503-507 (GITQH) is G2. A G3 region spans residues 524 to 527 (DTPG). GTP-binding positions include 524–528 (DTPGH) and 578–581 (NKID). The interval 578–581 (NKID) is G4. The interval 614–616 (SAK) is G5.

Belongs to the TRAFAC class translation factor GTPase superfamily. Classic translation factor GTPase family. IF-2 subfamily.

The protein localises to the cytoplasm. In terms of biological role, one of the essential components for the initiation of protein synthesis. Protects formylmethionyl-tRNA from spontaneous hydrolysis and promotes its binding to the 30S ribosomal subunits. Also involved in the hydrolysis of GTP during the formation of the 70S ribosomal complex. This Burkholderia multivorans (strain ATCC 17616 / 249) protein is Translation initiation factor IF-2.